A 346-amino-acid chain; its full sequence is MNPITLIIIYFTILMGPVITMSSSNLLLMWVGLEMSLLAIIPLLANKKSPRSTEAATKYFLTQATASMIILLVIILNYKQSGMWTLQQQTNNMLLNMMLISLAMKLGLAPFHYWLPEVTQGIPLHIGLILLTWQKIAPLSILYQFYQLLNPTITTILAISSVFVGAWGGLNQTQTRKIMAYSSIAHMGWMTAILPYNPNLTLLNLTIYILLTVPMFITLMTNSATTINTLSLAWNKTPMILTMTSIILLSLGGLPPLTGFLPKWAIISELLKNNCSTLSTLMAIMALLSLFFYTRLIYSMSLTMFPTNNNSKMISHHHQNPKHNFILPTLTVLSTLTLPLSSQLIT.

10 helical membrane passes run 25 to 45 (NLLL…PLLA), 56 to 76 (ATKY…VIIL), 94 to 114 (LLNM…FHYW), 122 to 142 (IPLH…LSIL), 148 to 168 (LLNP…GAWG), 178 to 198 (IMAY…PYNP), 200 to 220 (LTLL…ITLM), 240 to 260 (ILTM…LTGF), 278 to 298 (LSTL…RLIY), and 325 to 345 (FILP…SQLI).

The protein belongs to the complex I subunit 2 family. Core subunit of respiratory chain NADH dehydrogenase (Complex I) which is composed of 45 different subunits. Interacts with TMEM242.

The protein localises to the mitochondrion inner membrane. It catalyses the reaction a ubiquinone + NADH + 5 H(+)(in) = a ubiquinol + NAD(+) + 4 H(+)(out). Its function is as follows. Core subunit of the mitochondrial membrane respiratory chain NADH dehydrogenase (Complex I) which catalyzes electron transfer from NADH through the respiratory chain, using ubiquinone as an electron acceptor. Essential for the catalytic activity and assembly of complex I. This chain is NADH-ubiquinone oxidoreductase chain 2, found in Rattus norvegicus (Rat).